We begin with the raw amino-acid sequence, 141 residues long: Large ribosomal subunit protein uL11 (141 aa).

This sequence belongs to the universal ribosomal protein uL11 family. As to quaternary structure, part of the ribosomal stalk of the 50S ribosomal subunit. Interacts with L10 and the large rRNA to form the base of the stalk. L10 forms an elongated spine to which L12 dimers bind in a sequential fashion forming a multimeric L10(L12)X complex. Post-translationally, one or more lysine residues are methylated.

Forms part of the ribosomal stalk which helps the ribosome interact with GTP-bound translation factors. The protein is Large ribosomal subunit protein uL11 of Campylobacter fetus subsp. fetus (strain 82-40).